Here is a 290-residue protein sequence, read N- to C-terminus: Bifunctional protein FolD (290 aa).

NADP(+) is bound by residues 167-169 (GRS), Ser-192, and Ile-233.

It belongs to the tetrahydrofolate dehydrogenase/cyclohydrolase family. Homodimer.

The catalysed reaction is (6R)-5,10-methylene-5,6,7,8-tetrahydrofolate + NADP(+) = (6R)-5,10-methenyltetrahydrofolate + NADPH. It catalyses the reaction (6R)-5,10-methenyltetrahydrofolate + H2O = (6R)-10-formyltetrahydrofolate + H(+). The protein operates within one-carbon metabolism; tetrahydrofolate interconversion. Functionally, catalyzes the oxidation of 5,10-methylenetetrahydrofolate to 5,10-methenyltetrahydrofolate and then the hydrolysis of 5,10-methenyltetrahydrofolate to 10-formyltetrahydrofolate. This Azorhizobium caulinodans (strain ATCC 43989 / DSM 5975 / JCM 20966 / LMG 6465 / NBRC 14845 / NCIMB 13405 / ORS 571) protein is Bifunctional protein FolD.